The primary structure comprises 2192 residues: BEACH domain-containing protein lvsE (2192 aa).

4 disordered regions span residues 948–969 (STSL…TSTG), 996–1065 (TTTT…DEPE), 1160–1303 (NESQ…NNLS), and 1343–1363 (DENG…SSSN). Over residues 996-1049 (TTTTTTTTTTTTTTSTTSNTGNDSPLSIESPISSPVLIENTTNTTNTTTTNTTN) the composition is skewed to low complexity. Residues 1171-1187 (NIDNLNPNTGLPYNKST) show a composition bias toward polar residues. Positions 1188–1231 (NNLSNVNNVNNNNNNNSNNINVSGNNTIGPSSSKSPLRNSRSMS) are enriched in low complexity. Residues 1232–1243 (IGSSATKSPSRQ) show a composition bias toward polar residues. 2 stretches are compositionally biased toward low complexity: residues 1253-1303 (NNNS…NNLS) and 1350-1363 (SSPN…SSSN). The BEACH-type PH domain maps to 1366-1491 (IEEEKFIGSW…ESIQIFNKIV (126 aa)). In terms of domain architecture, BEACH spans 1504 to 1795 (DHPSKIIKKS…QLFSKPHPIR (292 aa)). Over residues 1823–1849 (GTINSSFSSTSTSTSTSSPPPSTLNSP) the composition is skewed to low complexity. Residues 1823–1851 (GTINSSFSSTSTSTSTSSPPPSTLNSPQG) are disordered. WD repeat units lie at residues 1973–2012 (FHHD…IKDS), 2022–2061 (SHDE…YQRS), and 2156–2192 (DSPA…VKDL).

The sequence is that of BEACH domain-containing protein lvsE (lvsE) from Dictyostelium discoideum (Social amoeba).